The following is a 348-amino-acid chain: GTPase Obg (348 aa).

The Obg domain occupies 1 to 159; that stretch reads MKFLDQAKIY…KTIILRLKLI (159 aa). The OBG-type G domain occupies 160–327; the sequence is ADAGLVGLPN…VLRLAADEIW (168 aa). Residues 166–173, 191–195, 212–215, 279–282, and 308–310 each bind GTP; these read GLPNAGKS, FTTLT, DIPG, NKMD, and SGV. Ser173 and Thr193 together coordinate Mg(2+).

The protein belongs to the TRAFAC class OBG-HflX-like GTPase superfamily. OBG GTPase family. In terms of assembly, monomer. It depends on Mg(2+) as a cofactor.

Its subcellular location is the cytoplasm. Its function is as follows. An essential GTPase which binds GTP, GDP and possibly (p)ppGpp with moderate affinity, with high nucleotide exchange rates and a fairly low GTP hydrolysis rate. Plays a role in control of the cell cycle, stress response, ribosome biogenesis and in those bacteria that undergo differentiation, in morphogenesis control. This is GTPase Obg from Parvibaculum lavamentivorans (strain DS-1 / DSM 13023 / NCIMB 13966).